Consider the following 291-residue polypeptide: 4-hydroxy-tetrahydrodipicolinate synthase (291 aa).

Threonine 45 is a pyruvate binding site. Tyrosine 131 (proton donor/acceptor) is an active-site residue. The active-site Schiff-base intermediate with substrate is the lysine 159. Isoleucine 202 is a pyruvate binding site.

Belongs to the DapA family. In terms of assembly, homotetramer; dimer of dimers.

Its subcellular location is the cytoplasm. It carries out the reaction L-aspartate 4-semialdehyde + pyruvate = (2S,4S)-4-hydroxy-2,3,4,5-tetrahydrodipicolinate + H2O + H(+). The protein operates within amino-acid biosynthesis; L-lysine biosynthesis via DAP pathway; (S)-tetrahydrodipicolinate from L-aspartate: step 3/4. Its function is as follows. Catalyzes the condensation of (S)-aspartate-beta-semialdehyde [(S)-ASA] and pyruvate to 4-hydroxy-tetrahydrodipicolinate (HTPA). The chain is 4-hydroxy-tetrahydrodipicolinate synthase from Methanococcoides burtonii (strain DSM 6242 / NBRC 107633 / OCM 468 / ACE-M).